An 84-amino-acid polypeptide reads, in one-letter code: ATP synthase subunit c (84 aa).

The next 2 helical transmembrane spans lie at 9-29 and 54-74; these read IIGASILLAFAALGTAIGFAI and IVAGLLDAIAMIAVGISLLFI.

This sequence belongs to the ATPase C chain family. F-type ATPases have 2 components, F(1) - the catalytic core - and F(0) - the membrane proton channel. F(1) has five subunits: alpha(3), beta(3), gamma(1), delta(1), epsilon(1). F(0) has three main subunits: a(1), b(2) and c(10-14). The alpha and beta chains form an alternating ring which encloses part of the gamma chain. F(1) is attached to F(0) by a central stalk formed by the gamma and epsilon chains, while a peripheral stalk is formed by the delta and b chains.

It is found in the cell inner membrane. Functionally, f(1)F(0) ATP synthase produces ATP from ADP in the presence of a proton or sodium gradient. F-type ATPases consist of two structural domains, F(1) containing the extramembraneous catalytic core and F(0) containing the membrane proton channel, linked together by a central stalk and a peripheral stalk. During catalysis, ATP synthesis in the catalytic domain of F(1) is coupled via a rotary mechanism of the central stalk subunits to proton translocation. Key component of the F(0) channel; it plays a direct role in translocation across the membrane. A homomeric c-ring of between 10-14 subunits forms the central stalk rotor element with the F(1) delta and epsilon subunits. The protein is ATP synthase subunit c of Haemophilus influenzae (strain ATCC 51907 / DSM 11121 / KW20 / Rd).